The chain runs to 156 residues: Ribosomal RNA large subunit methyltransferase H (156 aa).

Residues L73, G104, and 123–128 (IGPLTL) each bind S-adenosyl-L-methionine.

It belongs to the RNA methyltransferase RlmH family. Homodimer.

The protein localises to the cytoplasm. It catalyses the reaction pseudouridine(1915) in 23S rRNA + S-adenosyl-L-methionine = N(3)-methylpseudouridine(1915) in 23S rRNA + S-adenosyl-L-homocysteine + H(+). Specifically methylates the pseudouridine at position 1915 (m3Psi1915) in 23S rRNA. This chain is Ribosomal RNA large subunit methyltransferase H, found in Stenotrophomonas maltophilia (strain R551-3).